We begin with the raw amino-acid sequence, 283 residues long: uncharacterized protein (283 aa).

This is an uncharacterized protein from Methanocaldococcus jannaschii (strain ATCC 43067 / DSM 2661 / JAL-1 / JCM 10045 / NBRC 100440) (Methanococcus jannaschii).